Reading from the N-terminus, the 356-residue chain is MHKVLAIETSCDETSVSIVSNSGDIYKIHSNIVASQIEDHSKWGGVVPELAARKHLELLPFVLEQALEESKIRIEKIDVIASTVTPGLVGCLRVGSITARSLCTLYSKPFLGIHHLEGHLSSILFSKNYPKPPFLTLLVSGGHTELIKVGERRKMQRLGRSYDDAAGEAFDKVGRLLGLSYPGGPAIAKIAKKGNASKFNLPKCKISDKEGGFLKYDFSFSGLKTAVLRLVEKINLNGDEIPIPDIAASFERVVAEVLVERTIKCANDYGLDNIVVVGGVAANDTLRKMMISEACKKSIKVHLAPINLCTDNAAMIGAAALYRLKFKAYESSLKLGISGRLPIDQANTLYENKPPF.

Fe cation contacts are provided by H115 and H119. Substrate is bound by residues L138 to G142, D171, G184, and N283. Residue D311 participates in Fe cation binding.

This sequence belongs to the KAE1 / TsaD family. The cofactor is Fe(2+).

The protein resides in the cytoplasm. It carries out the reaction L-threonylcarbamoyladenylate + adenosine(37) in tRNA = N(6)-L-threonylcarbamoyladenosine(37) in tRNA + AMP + H(+). Required for the formation of a threonylcarbamoyl group on adenosine at position 37 (t(6)A37) in tRNAs that read codons beginning with adenine. Is involved in the transfer of the threonylcarbamoyl moiety of threonylcarbamoyl-AMP (TC-AMP) to the N6 group of A37, together with TsaE and TsaB. TsaD likely plays a direct catalytic role in this reaction. In Prochlorococcus marinus subsp. pastoris (strain CCMP1986 / NIES-2087 / MED4), this protein is tRNA N6-adenosine threonylcarbamoyltransferase.